A 234-amino-acid polypeptide reads, in one-letter code: Zinc finger FYVE domain-containing protein 21 (234 aa).

The FYVE-type zinc finger occupies Asp-44–His-104. Positions 50, 53, 66, 69, 74, 77, 96, and 99 each coordinate Zn(2+). The PH-like stretch occupies residues Ala-107–Gln-234.

In terms of assembly, interacts with PTK2/FAK1. In terms of tissue distribution, widely expressed.

The protein localises to the cell junction. The protein resides in the focal adhesion. It is found in the cytoplasmic vesicle. Its subcellular location is the endosome. Functionally, plays a role in cell adhesion, and thereby in cell motility which requires repeated formation and disassembly of focal adhesions. Regulates microtubule-induced PTK2/FAK1 dephosphorylation, an event important for focal adhesion disassembly, as well as integrin beta-1/ITGB1 cell surface expression. The polypeptide is Zinc finger FYVE domain-containing protein 21 (Zfyve21) (Mus musculus (Mouse)).